A 239-amino-acid polypeptide reads, in one-letter code: Ubiquinone biosynthesis O-methyltransferase (239 aa).

The S-adenosyl-L-methionine site is built by Arg-44, Gly-63, Asp-84, and Met-128.

The protein belongs to the methyltransferase superfamily. UbiG/COQ3 family.

It catalyses the reaction a 3-demethylubiquinol + S-adenosyl-L-methionine = a ubiquinol + S-adenosyl-L-homocysteine + H(+). The catalysed reaction is a 3-(all-trans-polyprenyl)benzene-1,2-diol + S-adenosyl-L-methionine = a 2-methoxy-6-(all-trans-polyprenyl)phenol + S-adenosyl-L-homocysteine + H(+). Its pathway is cofactor biosynthesis; ubiquinone biosynthesis. Its function is as follows. O-methyltransferase that catalyzes the 2 O-methylation steps in the ubiquinone biosynthetic pathway. This chain is Ubiquinone biosynthesis O-methyltransferase, found in Xanthomonas euvesicatoria pv. vesicatoria (strain 85-10) (Xanthomonas campestris pv. vesicatoria).